The following is a 62-amino-acid chain: Large ribosomal subunit protein uL29 (62 aa).

Belongs to the universal ribosomal protein uL29 family.

This chain is Large ribosomal subunit protein uL29, found in Geobacter metallireducens (strain ATCC 53774 / DSM 7210 / GS-15).